Here is a 578-residue protein sequence, read N- to C-terminus: NADPH oxidase 4 (578 aa).

Residues 1 to 16 (MALSWRSWLANEGVKH) lie on the Cytoplasmic side of the membrane. A helical membrane pass occupies residues 17–37 (LCLLVWLSLNVLLFWKTFLLY). At 38-62 (NQGPEYYYIHQMLGLGLCLSRASAS) the chain is on the extracellular side. Residues 58 to 303 (RASASVLNLN…YCAERLYRCI (246 aa)) form the Ferric oxidoreductase domain. Residues 63 to 83 (VLNLNCSLILLPMCRTVLAYL) form a helical membrane-spanning segment. At 84–104 (RGSQKVPSRRTRRLLDKSKTL) the chain is on the cytoplasmic side. The helical transmembrane segment at 105–125 (HITCGITICIFSGVHVAAHLV) threads the bilayer. Residues 126–154 (NALNFSVNYSEHFLALNAARYQNEDPRKL) lie on the Extracellular side of the membrane. N-linked (GlcNAc...) asparagine glycosylation occurs at N133. The helical transmembrane segment at 155–175 (LFTTVPGLTGVCMVVVLFLMV) threads the bilayer. The Cytoplasmic portion of the chain corresponds to 176–188 (TASTYAIRVSNYD). The helical transmembrane segment at 189–209 (IFWYTHNLFFVFYMLLLLHVS) threads the bilayer. Over 210–424 (GGLLKYQTNL…SPFEESLNYE (215 aa)) the chain is Extracellular. Residues 218-273 (NLDTHPPGCISLNRTPSQNMSIADYVSEHFHGSLPGGFSKLEDHYQKTLVKICLEE) are E-loop; essential for H2O2 generating catalytic activity. Residues 248–575 (HGSLPGGFSK…YGTKFEYNKE (328 aa)) are mediates interaction with TLR4. The FAD-binding FR-type domain occupies 304–419 (RSNKPVTIIS…DGPFGSPFEE (116 aa)). A helical membrane pass occupies residues 425–445 (VSLCVAGGIGVTPFASILNTL). Residues 446–578 (LDDWKPYKLR…KFEYNKESFS (133 aa)) lie on the Cytoplasmic side of the membrane.

As to quaternary structure, interacts with TLR4. Interacts with, relocalizes and stabilizes CYBA/p22phox. Interacts with protein disulfide isomerase. Interacts with PPP1R15A. Interacts with LRRC8A; this interaction prevents the ubiquitin-mediated degradation of LRRC8A. Heme is required as a cofactor. N-glycosylation is required for the function. Expressed in vascular smooth muscle.

It is found in the cytoplasm. Its subcellular location is the endoplasmic reticulum membrane. The protein resides in the cell membrane. The protein localises to the cell junction. It localises to the focal adhesion. It is found in the nucleus. It carries out the reaction NADPH + 2 O2 = 2 superoxide + NADP(+) + H(+). The enzyme catalyses NADPH + O2 + H(+) = H2O2 + NADP(+). Activated by insulin. Inhibited by diphenylene iodonium. Inhibited by plumbagin. Activated by phorbol 12-myristate 13-acetate (PMA). In terms of biological role, NADPH oxidase that catalyzes predominantly the reduction of oxygen to H2O2. Can also catalyze to a smaller extent, the reduction of oxygen to superoxide. May function as an oxygen sensor regulating the KCNK3/TASK-1 potassium channel and HIF1A activity. May regulate insulin signaling cascade. May play a role in apoptosis, bone resorption and lipolysaccharide-mediated activation of NFKB. May produce superoxide in the nucleus and play a role in regulating gene expression upon cell stimulation. Promotes ferroptosis, reactive oxygen species production and reduced glutathione (GSH) levels by activating NLRP3 inflammasome activation and cytokine release. The polypeptide is NADPH oxidase 4 (Nox4) (Rattus norvegicus (Rat)).